Reading from the N-terminus, the 637-residue chain is Choline O-acetyltransferase (637 aa).

Positions 1-13 (MPVSKREQSKDTG) are enriched in basic and acidic residues. The tract at residues 1-20 (MPVSKREQSKDTGDPCALPK) is disordered. H329 acts as the Proton acceptor in catalysis. CoA is bound by residues 407 to 419 (GKEFIKRQKMSPD), S445, and Q545.

This sequence belongs to the carnitine/choline acetyltransferase family.

The enzyme catalyses choline + acetyl-CoA = acetylcholine + CoA. Catalyzes the reversible synthesis of acetylcholine (ACh) from acetyl CoA and choline at cholinergic synapses. This is Choline O-acetyltransferase (chat) from Danio rerio (Zebrafish).